The following is a 683-amino-acid chain: Receptor-like serine/threonine-protein kinase At2g45590 (683 aa).

Residues 1–21 (MPSRLSPPDIPPLQPTPTVSD) form a disordered region. The Extracellular portion of the chain corresponds to 1–30 (MPSRLSPPDIPPLQPTPTVSDGHHRFQTLP). The chain crosses the membrane as a helical span at residues 31 to 51 (LIIAGSLTLTGVLLILVTLLI). At 52–683 (YRRLYRNRTA…FPFKSRKKAR (632 aa)) the chain is on the cytoplasmic side. Positions 92–664 (FSESTHLGHG…GVSEPPHLPF (573 aa)) constitute a Protein kinase domain. ATP-binding positions include 98 to 106 (LGHGGFGSV) and lysine 121. The Proton acceptor role is filled by aspartate 223. A disordered region spans residues 406 to 436 (ERPSNNKEWINNGDGSSSVSKKKKKEKKRKP). Polar residues predominate over residues 411 to 424 (NKEWINNGDGSSSV). Over residues 425–436 (SKKKKKEKKRKP) the composition is skewed to basic residues.

This sequence belongs to the protein kinase superfamily. Ser/Thr protein kinase family.

Its subcellular location is the cell membrane. The catalysed reaction is L-seryl-[protein] + ATP = O-phospho-L-seryl-[protein] + ADP + H(+). It catalyses the reaction L-threonyl-[protein] + ATP = O-phospho-L-threonyl-[protein] + ADP + H(+). This chain is Receptor-like serine/threonine-protein kinase At2g45590, found in Arabidopsis thaliana (Mouse-ear cress).